We begin with the raw amino-acid sequence, 821 residues long: Calpain-3 (821 aa).

Residues 1–34 (MPTVISASMAPRTGASQVPRTMPQAAQGKGTEAG) are disordered. The Calpain catalytic domain maps to 73–417 (LYLDPEFPPD…FTKLEICNLT (345 aa)). Active-site residues include Cys128, His334, and Asn358. The segment at 418–586 (ADALESDKLQ…KRNLSEEVEN (169 aa)) is domain III. A linker region spans residues 587–649 (TISVDRPVRK…EPSNTDQESE (63 aa)). Positions 603 to 652 (IFVSDRANSNKELGVDQESEEGQDKTSPDKQEKSPKPEPSNTDQESEEQQ) are disordered. Residues 624 to 638 (GQDKTSPDKQEKSPK) show a composition bias toward basic and acidic residues. The segment covering 641–652 (PSNTDQESEEQQ) has biased composition (polar residues). 4 consecutive EF-hand domains span residues 649-683 (EEQQQFRNIFRQIAGDDMEICADELKNVLNRVVNK), 692-725 (FTLESCRSMIALMDTDGSGRLNLQEFHHLWKKIK), 722-757 (KKIKSWQKIFKHYDTDQSGTINSYEMRNAVNDAGFH), and 787-821 (VRLEGMFRAFNAFDKDGDGIIKLNVLEWLQLTMYA). A domain IV region spans residues 650 to 821 (EQQQFRNIFR…LEWLQLTMYA (172 aa)). Ca(2+) contacts are provided by Ala662, Asp665, Glu667, Glu672, Asp705, Asp707, Ser709, Arg711, Glu716, Asp735, Asp737, Ser739, Thr741, Glu746, Asp800, Asp802, Asp804, and Ile806.

Belongs to the peptidase C2 family. In terms of assembly, homodimer; via EF-hand domain 4. Interacts with TTN/titin. Interacts with CMYA5; this interaction, which results in CMYA5 proteolysis, may protect CAPN3 from autolysis. Interacts with SIMC1. Interacts with UTP25; the interaction is required for CAPN3 translocation to the nucleolus. As to expression, skeletal muscle.

The protein localises to the cytoplasm. It is found in the nucleus. It localises to the nucleolus. The enzyme catalyses Broad endopeptidase activity.. Its activity is regulated as follows. Activated by micromolar concentrations of calcium and inhibited by calpastatin. Its function is as follows. Calcium-regulated non-lysosomal thiol-protease. Proteolytically cleaves CTBP1. Mediates, with UTP25, the proteasome-independent degradation of p53/TP53. The polypeptide is Calpain-3 (CAPN3) (Sus scrofa (Pig)).